The sequence spans 264 residues: Thiazole synthase (264 aa).

The Schiff-base intermediate with DXP role is filled by K106. 1-deoxy-D-xylulose 5-phosphate is bound by residues G167, 193–194, and 215–216; these read AG and NT.

Belongs to the ThiG family. In terms of assembly, homotetramer. Forms heterodimers with either ThiH or ThiS.

The protein localises to the cytoplasm. The catalysed reaction is [ThiS sulfur-carrier protein]-C-terminal-Gly-aminoethanethioate + 2-iminoacetate + 1-deoxy-D-xylulose 5-phosphate = [ThiS sulfur-carrier protein]-C-terminal Gly-Gly + 2-[(2R,5Z)-2-carboxy-4-methylthiazol-5(2H)-ylidene]ethyl phosphate + 2 H2O + H(+). Its pathway is cofactor biosynthesis; thiamine diphosphate biosynthesis. In terms of biological role, catalyzes the rearrangement of 1-deoxy-D-xylulose 5-phosphate (DXP) to produce the thiazole phosphate moiety of thiamine. Sulfur is provided by the thiocarboxylate moiety of the carrier protein ThiS. In vitro, sulfur can be provided by H(2)S. The protein is Thiazole synthase of Xylella fastidiosa (strain 9a5c).